Consider the following 223-residue polypeptide: UPF0758 protein FMG_0357 (223 aa).

The MPN domain maps to 101-223 (SLNDPDSVAE…SLSMRKGMYF (123 aa)). Residues His172, His174, and Asp185 each coordinate Zn(2+). The short motif at 172–185 (HNHPSGSLIPSNAD) is the JAMM motif element.

It belongs to the UPF0758 family.

The protein is UPF0758 protein FMG_0357 of Finegoldia magna (strain ATCC 29328 / DSM 20472 / WAL 2508) (Peptostreptococcus magnus).